The primary structure comprises 143 residues: MQKRRQSGFTLLEVMVVIVILGILASLVVPNLMGNKEKADQQKAVSDIVALENALDMYKLDNNRYPTTEQGLDALVNKPTAAPEPRSYRDGGYIKRLPQDPWGNPYQMLSPGQFGKIDIFSMGLDGEAGTDDDIGNWNLKDFQ.

The propeptide at 1–8 is leader sequence; sequence MQKRRQSG. Phe-9 carries the post-translational modification N-methylphenylalanine. The chain crosses the membrane as a helical span at residues 9–29; the sequence is FTLLEVMVVIVILGILASLVV. The tract at residues 70–92 is disordered; that stretch reads QGLDALVNKPTAAPEPRSYRDGG.

Belongs to the GSP G family. In terms of assembly, type II secretion system is composed of four main components: the outer membrane complex, the inner membrane complex, the cytoplasmic secretion ATPase and the periplasm-spanning pseudopilus. Forms homomultimers. Cleaved by the prepilin peptidase. Post-translationally, methylated by prepilin peptidase at the amino group of the N-terminal phenylalanine once the leader sequence is cleaved.

The protein localises to the cell inner membrane. Its function is as follows. Core component of the type II secretion system required for the energy-dependent secretion of extracellular factors such as proteases and toxins from the periplasm. Pseudopilin (pilin-like) protein that polymerizes to form the pseudopilus. Further polymerization triggers pseudopilus growth. This chain is Type II secretion system core protein G (exeG), found in Aeromonas hydrophila.